Reading from the N-terminus, the 299-residue chain is NAD kinase (299 aa).

The Proton acceptor role is filled by Asp-75. Residues 75 to 76 (DG), 149 to 150 (ND), Arg-177, Asp-179, 190 to 195 (TAYALS), Ala-214, and Gln-248 contribute to the NAD(+) site.

It belongs to the NAD kinase family. It depends on a divalent metal cation as a cofactor.

It is found in the cytoplasm. It carries out the reaction NAD(+) + ATP = ADP + NADP(+) + H(+). Functionally, involved in the regulation of the intracellular balance of NAD and NADP, and is a key enzyme in the biosynthesis of NADP. Catalyzes specifically the phosphorylation on 2'-hydroxyl of the adenosine moiety of NAD to yield NADP. This is NAD kinase from Burkholderia thailandensis (strain ATCC 700388 / DSM 13276 / CCUG 48851 / CIP 106301 / E264).